The primary structure comprises 414 residues: Probable isoprenylcysteine alpha-carbonyl methylesterase ICME (414 aa).

The segment at 1-54 is disordered; that stretch reads MQPASPVSGDAGPVAEAVPPRGAPQVLVRRRSVPFSPDSPLAPGSRGGGERRST. 2 helical membrane passes run 90–110 and 145–165; these read LAAL…VGYY and VVAF…GALL. Residues 151 to 153 and 222 to 224 contribute to the substrate site; these read GGA and QSA. Active-site residues include S223, D323, and H355.

It belongs to the AB hydrolase superfamily. Isoprenylcysteine methylesterase family.

It is found in the endoplasmic reticulum membrane. It localises to the golgi apparatus membrane. It carries out the reaction [protein]-C-terminal S-[(2E,6E)-farnesyl]-L-cysteine methyl ester + H2O = [protein]-C-terminal S-[(2E,6E)-farnesyl]-L-cysteine + methanol + H(+). Functionally, catalyzes the demethylation of isoprenylcysteine methylesters. The sequence is that of Probable isoprenylcysteine alpha-carbonyl methylesterase ICME (IMCE) from Oryza sativa subsp. japonica (Rice).